The primary structure comprises 396 residues: Phosphoglycerate kinase (396 aa).

Residues D21–N23, R36, H59–R62, R118, and R151 contribute to the substrate site. ATP is bound by residues K201, E323, and G353–T356.

Belongs to the phosphoglycerate kinase family. In terms of assembly, monomer.

The protein resides in the cytoplasm. It carries out the reaction (2R)-3-phosphoglycerate + ATP = (2R)-3-phospho-glyceroyl phosphate + ADP. The protein operates within carbohydrate degradation; glycolysis; pyruvate from D-glyceraldehyde 3-phosphate: step 2/5. This is Phosphoglycerate kinase from Rhodospirillum centenum (strain ATCC 51521 / SW).